An 89-amino-acid polypeptide reads, in one-letter code: Small ribosomal subunit protein uS15 (89 aa).

Belongs to the universal ribosomal protein uS15 family. As to quaternary structure, part of the 30S ribosomal subunit. Forms a bridge to the 50S subunit in the 70S ribosome, contacting the 23S rRNA.

Its function is as follows. One of the primary rRNA binding proteins, it binds directly to 16S rRNA where it helps nucleate assembly of the platform of the 30S subunit by binding and bridging several RNA helices of the 16S rRNA. In terms of biological role, forms an intersubunit bridge (bridge B4) with the 23S rRNA of the 50S subunit in the ribosome. This chain is Small ribosomal subunit protein uS15, found in Pseudomonas fluorescens (strain SBW25).